Consider the following 377-residue polypeptide: Hydrogenase maturation factor HypD (377 aa).

Residues cysteine 41, cysteine 69, and cysteine 72 each coordinate Fe cation.

It belongs to the HypD family. [4Fe-4S] cluster is required as a cofactor.

Its pathway is protein modification; [NiFe] hydrogenase maturation. Functionally, involved in the maturation of [NiFe] hydrogenases. Involved in the biosynthesis of the Fe(CN)(2)CO cofactor. The protein is Hydrogenase maturation factor HypD of Rhodobacter capsulatus (Rhodopseudomonas capsulata).